The sequence spans 250 residues: NAD(P)H-hydrate epimerase (250 aa).

The YjeF N-terminal domain maps to 14-238; it reads AAALDVELMS…SIAEKYGIQK (225 aa). 74 to 78 is a (6S)-NADPHX binding site; that stretch reads NNGGD. The K(+) site is built by Asn-75 and Asp-143. Residues 147-154, Tyr-159, and Asp-180 contribute to the (6S)-NADPHX site; that span reads GFSFHGTA. Ser-183 contributes to the K(+) binding site.

Belongs to the NnrE/AIBP family. Requires K(+) as cofactor.

The enzyme catalyses (6R)-NADHX = (6S)-NADHX. The catalysed reaction is (6R)-NADPHX = (6S)-NADPHX. Catalyzes the epimerization of the S- and R-forms of NAD(P)HX, a damaged form of NAD(P)H that is a result of enzymatic or heat-dependent hydration. This is a prerequisite for the S-specific NAD(P)H-hydrate dehydratase to allow the repair of both epimers of NAD(P)HX. This chain is NAD(P)H-hydrate epimerase, found in Thalassiosira pseudonana (Marine diatom).